The chain runs to 569 residues: Urease subunit alpha (569 aa).

A Urease domain is found at 131–569 (GGIDTHIHFI…LPLAQRYLLL (439 aa)). Residues H136, H138, and K219 each coordinate Ni(2+). K219 carries the post-translational modification N6-carboxylysine. Residue H221 coordinates substrate. Positions 248 and 274 each coordinate Ni(2+). H322 functions as the Proton donor in the catalytic mechanism. D362 contacts Ni(2+).

It belongs to the metallo-dependent hydrolases superfamily. Urease alpha subunit family. In terms of assembly, heterotrimer of UreA (gamma), UreB (beta) and UreC (alpha) subunits. Three heterotrimers associate to form the active enzyme. Requires Ni cation as cofactor. In terms of processing, carboxylation allows a single lysine to coordinate two nickel ions.

Its subcellular location is the cytoplasm. It catalyses the reaction urea + 2 H2O + H(+) = hydrogencarbonate + 2 NH4(+). The protein operates within nitrogen metabolism; urea degradation; CO(2) and NH(3) from urea (urease route): step 1/1. The polypeptide is Urease subunit alpha (Parasynechococcus marenigrum (strain WH8102)).